The primary structure comprises 423 residues: Gamma-glutamyl phosphate reductase (423 aa).

This sequence belongs to the gamma-glutamyl phosphate reductase family.

The protein resides in the cytoplasm. It catalyses the reaction L-glutamate 5-semialdehyde + phosphate + NADP(+) = L-glutamyl 5-phosphate + NADPH + H(+). The protein operates within amino-acid biosynthesis; L-proline biosynthesis; L-glutamate 5-semialdehyde from L-glutamate: step 2/2. Functionally, catalyzes the NADPH-dependent reduction of L-glutamate 5-phosphate into L-glutamate 5-semialdehyde and phosphate. The product spontaneously undergoes cyclization to form 1-pyrroline-5-carboxylate. The sequence is that of Gamma-glutamyl phosphate reductase from Burkholderia ambifaria (strain ATCC BAA-244 / DSM 16087 / CCUG 44356 / LMG 19182 / AMMD) (Burkholderia cepacia (strain AMMD)).